The chain runs to 421 residues: Gamma-glutamyl phosphate reductase (421 aa).

This sequence belongs to the gamma-glutamyl phosphate reductase family.

Its subcellular location is the cytoplasm. It catalyses the reaction L-glutamate 5-semialdehyde + phosphate + NADP(+) = L-glutamyl 5-phosphate + NADPH + H(+). Its pathway is amino-acid biosynthesis; L-proline biosynthesis; L-glutamate 5-semialdehyde from L-glutamate: step 2/2. Its function is as follows. Catalyzes the NADPH-dependent reduction of L-glutamate 5-phosphate into L-glutamate 5-semialdehyde and phosphate. The product spontaneously undergoes cyclization to form 1-pyrroline-5-carboxylate. This chain is Gamma-glutamyl phosphate reductase, found in Dinoroseobacter shibae (strain DSM 16493 / NCIMB 14021 / DFL 12).